A 145-amino-acid chain; its full sequence is D-aminoacyl-tRNA deacylase (145 aa).

The short motif at 137 to 138 is the Gly-cisPro motif, important for rejection of L-amino acids element; it reads GP.

The protein belongs to the DTD family. As to quaternary structure, homodimer.

Its subcellular location is the cytoplasm. It carries out the reaction glycyl-tRNA(Ala) + H2O = tRNA(Ala) + glycine + H(+). The enzyme catalyses a D-aminoacyl-tRNA + H2O = a tRNA + a D-alpha-amino acid + H(+). An aminoacyl-tRNA editing enzyme that deacylates mischarged D-aminoacyl-tRNAs. Also deacylates mischarged glycyl-tRNA(Ala), protecting cells against glycine mischarging by AlaRS. Acts via tRNA-based rather than protein-based catalysis; rejects L-amino acids rather than detecting D-amino acids in the active site. By recycling D-aminoacyl-tRNA to D-amino acids and free tRNA molecules, this enzyme counteracts the toxicity associated with the formation of D-aminoacyl-tRNA entities in vivo and helps enforce protein L-homochirality. The protein is D-aminoacyl-tRNA deacylase of Ectopseudomonas mendocina (strain ymp) (Pseudomonas mendocina).